The primary structure comprises 1241 residues: ATP-dependent helicase/nuclease subunit A (1241 aa).

The 474-residue stretch at 12–485 (SQWTDDQWKA…IDLAKNFRSR (474 aa)) folds into the UvrD-like helicase ATP-binding domain. 33–40 (AAAGSGKT) contacts ATP. The UvrD-like helicase C-terminal domain occupies 505–805 (GEIDYDADAE…RIMTIHKSKG (301 aa)).

It belongs to the helicase family. AddA subfamily. As to quaternary structure, heterodimer of AddA and AddB/RexB. It depends on Mg(2+) as a cofactor.

It catalyses the reaction Couples ATP hydrolysis with the unwinding of duplex DNA by translocating in the 3'-5' direction.. It carries out the reaction ATP + H2O = ADP + phosphate + H(+). Its function is as follows. The heterodimer acts as both an ATP-dependent DNA helicase and an ATP-dependent, dual-direction single-stranded exonuclease. Recognizes the chi site generating a DNA molecule suitable for the initiation of homologous recombination. The AddA nuclease domain is required for chi fragment generation; this subunit has the helicase and 3' -&gt; 5' nuclease activities. The polypeptide is ATP-dependent helicase/nuclease subunit A (Bacillus mycoides (strain KBAB4) (Bacillus weihenstephanensis)).